The sequence spans 1096 residues: Serine/threonine-protein kinase mig-15 (1096 aa).

A Protein kinase domain is found at 21–288 (FELIEVVGNG…TGALLRHPFI (268 aa)). ATP contacts are provided by residues 27-35 (VGNGTYGQV) and lysine 50. The active-site Proton acceptor is aspartate 151. Over residues 293 to 315 (HEQTIRHSIKEHIDRNRRVKKDD) the composition is skewed to basic and acidic residues. 4 disordered regions span residues 293 to 351 (HEQT…MIPM), 380 to 492 (LPQQ…QQSR), 517 to 545 (KMGG…EASI), and 574 to 664 (NGEG…DLLP). Residues 316–328 (ADYEYSGSEDDEP) show a composition bias toward acidic residues. A compositionally biased stretch (low complexity) spans 380 to 393 (LPQQPAPAPFQYQQ). Composition is skewed to basic and acidic residues over residues 397–408 (VEPRRESSEVKL) and 453–472 (NYEK…ERQA). Over residues 532–541 (SPPPPAPPPR) the composition is skewed to pro residues. Residues 629 to 642 (LDDDDSDSDNEEGN) show a composition bias toward acidic residues. In terms of domain architecture, CNH spans 778 to 1070 (SGEILCAALW…KFLCERNDKV (293 aa)).

It belongs to the protein kinase superfamily. STE Ser/Thr protein kinase family. STE20 subfamily.

It carries out the reaction L-seryl-[protein] + ATP = O-phospho-L-seryl-[protein] + ADP + H(+). The catalysed reaction is L-threonyl-[protein] + ATP = O-phospho-L-threonyl-[protein] + ADP + H(+). In terms of biological role, involved in cell migration and signal transduction. Important in several developmental processes including epidermal development, Q neuroblast migrations and muscle arm targeting. Required with ina-1/pat-3 to stabilize the commissural axons growth cone along a precise direction and are required for the cell to respond appropriately when signaling in the growth cone must change. During gonad morphogenesis, involved in distal tip cell (DTC) migration from the dorsal side of the hermaphrodite body to the midbody to allow for formation of gonad arms. This Caenorhabditis elegans protein is Serine/threonine-protein kinase mig-15 (mig-15).